The chain runs to 810 residues: Protein kinase C-binding protein NELL1 (810 aa).

A signal peptide spans 1–21 (MPMDLILVVWFCVCTARTVVG). N-linked (GlcNAc...) asparagine glycans are attached at residues Asn-40, Asn-53, Asn-83, Asn-224, Asn-294, and Asn-372. Residues 64–227 (EREIHAAPHV…TQCPNLNHTC (164 aa)) form the Laminin G-like domain. The 62-residue stretch at 271–332 (KTCQVSGLLY…IAGQCCKVCR (62 aa)) folds into the VWFC 1 domain. 3 disulfide bridges follow: Cys-395-Cys-407, Cys-401-Cys-416, and Cys-418-Cys-432. Ca(2+) contacts are provided by Asp-434, Ile-435, and Glu-437. One can recognise an EGF-like 1; calcium-binding domain in the interval 434 to 475 (DIDECAAKMHYCHANTVCVNLPGLYRCDCVPGYIRVDDFSCT). 15 disulfides stabilise this stretch: Cys-438–Cys-451, Cys-445–Cys-460, Cys-462–Cys-474, Cys-480–Cys-493, Cys-487–Cys-502, Cys-504–Cys-515, Cys-519–Cys-529, Cys-523–Cys-535, Cys-537–Cys-546, Cys-553–Cys-566, Cys-560–Cys-575, Cys-577–Cys-594, Cys-600–Cys-613, Cys-607–Cys-622, and Cys-624–Cys-630. Ca(2+)-binding residues include Asn-453, Leu-454, and Leu-457. Residues 476-516 (EHDECGSGQHNCDENAICTNTVQGHSCTCKPGYVGNGTICR) form the EGF-like 2; calcium-binding domain. An N-linked (GlcNAc...) asparagine glycan is attached at Asn-511. Residues 517–547 (AFCEEGCRYGGTCVAPNKCVCPSGFTGSHCE) enclose the EGF-like 3 domain. Positions 549–587 (DIDECSEGIIECHNHSRCVNLPGWYHCECRSGFHDDGTY) constitute an EGF-like 4; calcium-binding domain. Asn-562 is a glycosylation site (N-linked (GlcNAc...) asparagine). Residues 596-631 (DIDECALRTHTCWNDSACINLAGGFDCLCPSGPSCS) form the EGF-like 5; calcium-binding domain. Asn-609 carries N-linked (GlcNAc...) asparagine glycosylation. Residues 692-750 (SQCLDQNGHKLYRSGDNWTHSCQQCRCLEGEVDCWPLTCPNLSCEYTAILEGECCPRCV) form the VWFC 2 domain. N-linked (GlcNAc...) asparagine glycosylation is found at Asn-708, Asn-732, and Asn-758.

As to quaternary structure, homotrimer. Binds to PKC beta-1. Interacts with ATRAID; the interaction promotes osteoblast cell differentiation and mineralization. Interacts with ROBO3.

It is found in the cytoplasm. The protein localises to the nucleus envelope. The protein resides in the secreted. Functionally, plays a role in the control of cell growth and differentiation. Promotes osteoblast cell differentiation and terminal mineralization. This is Protein kinase C-binding protein NELL1 (NELL1) from Homo sapiens (Human).